The primary structure comprises 388 residues: Putative F-box protein At3g49520 (388 aa).

The F-box domain occupies 1–47; it reads MTTISDLPYDLVKEIFSWVPFTSLRAVRSTCKTWNALSKNQIFGKKS.

This is Putative F-box protein At3g49520 from Arabidopsis thaliana (Mouse-ear cress).